Reading from the N-terminus, the 296-residue chain is Sulfotransferase 1E1 (296 aa).

49 to 54 (KSGTTW) contributes to the 3'-phosphoadenylyl sulfate binding site. 107–109 (KTH) is a substrate binding site. H109 functions as the Proton acceptor in the catalytic mechanism. 3'-phosphoadenylyl sulfate-binding positions include R131, S139, Y194, 228–233 (TSFQEM), and 258–260 (RKG).

The protein belongs to the sulfotransferase 1 family. As to quaternary structure, homodimer. Post-translationally, the N-terminus is blocked. In terms of tissue distribution, adrenal gland and much less in liver. Detectable only during pregnancy in uterine.

It localises to the cytoplasm. It is found in the cytosol. The catalysed reaction is estrone + 3'-phosphoadenylyl sulfate = estrone 3-sulfate + adenosine 3',5'-bisphosphate + H(+). The enzyme catalyses (24S)-hydroxycholesterol + 3'-phosphoadenylyl sulfate = (24S)-hydroxycholesterol 3-sulfate + adenosine 3',5'-bisphosphate + H(+). It carries out the reaction 17beta-estradiol + 3'-phosphoadenylyl sulfate = 17beta-estradiol 3-sulfate + adenosine 3',5'-bisphosphate + H(+). It catalyses the reaction 3beta-hydroxyandrost-5-en-17-one + 3'-phosphoadenylyl sulfate = dehydroepiandrosterone 3-sulfate + adenosine 3',5'-bisphosphate + H(+). The catalysed reaction is 4-ethylphenol + 3'-phosphoadenylyl sulfate = 4-ethylphenyl sulfate + adenosine 3',5'-bisphosphate + H(+). Its activity is regulated as follows. Inhibited by estradiol. Functionally, sulfotransferase that utilizes 3'-phospho-5'-adenylyl sulfate (PAPS) as sulfonate donor to catalyze the sulfate conjugation of estradiol and estrone. Is a key enzyme in estrogen homeostasis, the sulfation of estrogens leads to their inactivation. Also sulfates dehydroepiandrosterone (DHEA), pregnenolone, (24S)-hydroxycholesteroland xenobiotic compounds like ethinylestradiol, equalenin, diethyl stilbesterol and 1-naphthol at significantly lower efficiency. Does not sulfonate cortisol, testosterone and dopamine. May play a role in gut microbiota-host metabolic interaction. O-sulfonates 4-ethylphenol (4-EP), a dietary tyrosine-derived metabolite produced by gut bacteria. The product 4-EPS crosses the blood-brain barrier and may negatively regulate oligodendrocyte maturation and myelination, affecting the functional connectivity of different brain regions associated with the limbic system. In Cavia porcellus (Guinea pig), this protein is Sulfotransferase 1E1 (SULT1E1).